We begin with the raw amino-acid sequence, 433 residues long: Probable M18 family aminopeptidase 2 (433 aa).

The Zn(2+) site is built by His79, His153, and His404.

It belongs to the peptidase M18 family. Zn(2+) is required as a cofactor.

The chain is Probable M18 family aminopeptidase 2 from Mycobacterium tuberculosis (strain ATCC 25177 / H37Ra).